We begin with the raw amino-acid sequence, 372 residues long: MAPAPPPAASFSPSEVQRRLAAGACWVRRGARLYDLSSFVRHHPGGEQLLRARAGQDISADLDGPPHRHSANARRWLEQYYVGELRGEQQGSMENEAVALEETQKTDPAMEPRFKVVDWDKDLVDWQKPLLWQVGHLGEKYDEWVHQPVTRPIRLFHSDLIEGLSKTVWYSVPIIWVPLVLYLSWSYYRTFAQGNVRLFTSFTTEYALAVPKSMFPGLFMLGIFLWSLIEYLIHRFLFHMKPPSDSYYLIMLHFVMHGQHHKAPFDGSRLVFPPVPASLVIGVFYLCLQLILPEAVGGTVFAGGLLGYVLYDMTHYYLHFGSPHRGSYLYNLKAHHVKHHFAHQKSGFGISTKLWDYCFHTLIPEKPHLKTQ.

The region spanning 8-86 (AASFSPSEVQ…LEQYYVGELR (79 aa)) is the Cytochrome b5 heme-binding domain. 2 residues coordinate heme: His-43 and His-69. Helical transmembrane passes span 168–188 (VWYSVPIIWVPLVLYLSWSYY) and 213–233 (SMFPGLFMLGIFLWSLIEYLI). Positions 219-361 (FMLGIFLWSL…TKLWDYCFHT (143 aa)) constitute a Fatty acid hydroxylase domain. The Zn(2+) site is built by His-234, His-239, His-257, His-260, and His-261. 2 helical membrane passes run 271-291 (VFPPVPASLVIGVFYLCLQLI) and 292-312 (LPEAVGGTVFAGGLLGYVLYD). 5 residues coordinate Zn(2+): His-315, His-319, His-336, His-339, and His-340.

Belongs to the sterol desaturase family. SCS7 subfamily. Zn(2+) serves as cofactor.

The protein resides in the endoplasmic reticulum membrane. Its subcellular location is the microsome membrane. It carries out the reaction a 1,2-saturated fatty acid + 2 Fe(II)-[cytochrome b5] + O2 + 2 H(+) = a (R)-2-hydroxy fatty acid + 2 Fe(III)-[cytochrome b5] + H2O. It catalyses the reaction hexadecanoate + 2 Fe(II)-[cytochrome b5] + O2 + 2 H(+) = (R)-2-hydroxyhexadecanoate + 2 Fe(III)-[cytochrome b5] + H2O. The enzyme catalyses octadecanoate + 2 Fe(II)-[cytochrome b5] + O2 + 2 H(+) = (R)-2-hydroxyoctadecanoate + 2 Fe(III)-[cytochrome b5] + H2O. The catalysed reaction is docosanoate + 2 Fe(II)-[cytochrome b5] + O2 + 2 H(+) = 2-hydroxydocosanoate + 2 Fe(III)-[cytochrome b5] + H2O. It carries out the reaction tetracosanoate + 2 Fe(II)-[cytochrome b5] + O2 + 2 H(+) = (R)-2-hydroxytetracosanoate + 2 Fe(III)-[cytochrome b5] + H2O. It participates in lipid metabolism; fatty acid metabolism. The protein operates within sphingolipid metabolism; galactosylceramide biosynthesis. Catalyzes the hydroxylation of free fatty acids at the C-2 position to produce 2-hydroxy fatty acids, which are building blocks of sphingolipids and glycosphingolipids common in neural tissue and epidermis. FA2H is stereospecific for the production of (R)-2-hydroxy fatty acids. Plays an essential role in the synthesis of galactosphingolipids of the myelin sheath. Responsible for the synthesis of sphingolipids and glycosphingolipids involved in the formation of epidermal lamellar bodies critical for skin permeability barrier. Participates in the synthesis of glycosphingolipids and a fraction of type II wax diesters in sebaceous gland, specifically regulating hair follicle homeostasis. Involved in the synthesis of sphingolipids of plasma membrane rafts, controlling lipid raft mobility and trafficking of raft-associated proteins. The protein is Fatty acid 2-hydroxylase (FA2H) of Macaca fascicularis (Crab-eating macaque).